Consider the following 570-residue polypeptide: Protein misato homolog 1 (570 aa).

A Phosphoserine modification is found at Ser495.

Belongs to the misato family. As to expression, present in all cell lines tested (at protein level). Widely expressed.

It is found in the mitochondrion outer membrane. Its subcellular location is the cytoplasm. Involved in the regulation of mitochondrial distribution and morphology. Required for mitochondrial fusion and mitochondrial network formation. This chain is Protein misato homolog 1 (MSTO1), found in Homo sapiens (Human).